The primary structure comprises 787 residues: LPS-assembly protein LptD (787 aa).

The N-terminal stretch at methionine 1–alanine 24 is a signal peptide.

This sequence belongs to the LptD family. Component of the lipopolysaccharide transport and assembly complex. Interacts with LptE and LptA.

The protein localises to the cell outer membrane. In terms of biological role, together with LptE, is involved in the assembly of lipopolysaccharide (LPS) at the surface of the outer membrane. The chain is LPS-assembly protein LptD from Pectobacterium atrosepticum (strain SCRI 1043 / ATCC BAA-672) (Erwinia carotovora subsp. atroseptica).